The sequence spans 189 residues: GMP synthase [glutamine-hydrolyzing] subunit A (189 aa).

The Glutamine amidotransferase type-1 domain maps to 5–189 (KILVVNNYGQ…TNFLEICEKY (185 aa)). Cys79 serves as the catalytic Nucleophile. Residues His166 and Glu168 contribute to the active site.

Heterodimer composed of a glutamine amidotransferase subunit (A) and a GMP-binding subunit (B).

The enzyme catalyses XMP + L-glutamine + ATP + H2O = GMP + L-glutamate + AMP + diphosphate + 2 H(+). It participates in purine metabolism; GMP biosynthesis; GMP from XMP (L-Gln route): step 1/1. Catalyzes the synthesis of GMP from XMP. In Methanosarcina barkeri (strain Fusaro / DSM 804), this protein is GMP synthase [glutamine-hydrolyzing] subunit A.